The sequence spans 151 residues: Ribosome maturation factor RimP (151 aa).

It belongs to the RimP family.

It is found in the cytoplasm. Its function is as follows. Required for maturation of 30S ribosomal subunits. This chain is Ribosome maturation factor RimP, found in Thermoanaerobacter pseudethanolicus (strain ATCC 33223 / 39E) (Clostridium thermohydrosulfuricum).